The sequence spans 693 residues: Polyphosphate kinase (693 aa).

Asn-57 is an ATP binding site. Mg(2+) is bound by residues Arg-383 and Arg-413. The active-site Phosphohistidine intermediate is His-443. 3 residues coordinate ATP: Tyr-476, Arg-572, and His-601.

The protein belongs to the polyphosphate kinase 1 (PPK1) family. Mg(2+) serves as cofactor. Post-translationally, an intermediate of this reaction is the autophosphorylated ppk in which a phosphate is covalently linked to a histidine residue through a N-P bond.

It carries out the reaction [phosphate](n) + ATP = [phosphate](n+1) + ADP. Catalyzes the reversible transfer of the terminal phosphate of ATP to form a long-chain polyphosphate (polyP). This chain is Polyphosphate kinase, found in Acinetobacter baumannii (strain ATCC 17978 / DSM 105126 / CIP 53.77 / LMG 1025 / NCDC KC755 / 5377).